The following is a 215-amino-acid chain: MNAPAPSSVRRTKKLPPLRVGIGGPVGSGKTTLLEMLCKAMRDRYDLVAITNDIYTKEDQRLLTVAGALPEERIMGVETGGCPHTAIREDASINLEAVDRMLARFPDADIVFIESGGDNLAATFSPELSDLTIYVIDVAGGEKIPRKGGPGITKSDLLVINKTDLAPLVGANLDVMASDTRKMRGERPYVMTNLKALDGVADVIAFIEKKGLLTV.

GTP is bound at residue 24–31 (GPVGSGKT).

Belongs to the SIMIBI class G3E GTPase family. UreG subfamily. Homodimer. UreD, UreF and UreG form a complex that acts as a GTP-hydrolysis-dependent molecular chaperone, activating the urease apoprotein by helping to assemble the nickel containing metallocenter of UreC. The UreE protein probably delivers the nickel.

The protein resides in the cytoplasm. Its function is as follows. Facilitates the functional incorporation of the urease nickel metallocenter. This process requires GTP hydrolysis, probably effectuated by UreG. The protein is Urease accessory protein UreG of Burkholderia orbicola (strain MC0-3).